Reading from the N-terminus, the 282-residue chain is Succinate dehydrogenase [ubiquinone] iron-sulfur subunit, mitochondrial (282 aa).

The transit peptide at 1–30 directs the protein to the mitochondrion; that stretch reads MAATVGVSLKRGFPAAVLGRVGLQFQACRG. Positions 42 to 135 constitute a 2Fe-2S ferredoxin-type domain; that stretch reads KKFAIYRWDP…VSKIYPLPHM (94 aa). N6-acetyllysine is present on residues Lys53 and Lys57. 4 residues coordinate [2Fe-2S] cluster: Cys95, Cys100, Cys103, and Cys115. Residues 148 to 220 form an interaction with SDHAF1 region; it reads FYAQYKSIEP…PAVLMQAYRW (73 aa). The 4Fe-4S ferredoxin-type domain occupies 178–208; the sequence is DREKLDGLYECILCACCSTSCPSYWWNGDKY. 3 residues coordinate [4Fe-4S] cluster: Cys188, Cys191, and Cys194. [3Fe-4S] cluster is bound at residue Cys198. Trp203 contributes to the a ubiquinone binding site. Positions 245 and 251 each coordinate [3Fe-4S] cluster. [4Fe-4S] cluster is bound at residue Cys255.

The protein belongs to the succinate dehydrogenase/fumarate reductase iron-sulfur protein family. In terms of assembly, component of complex II composed of four subunits: the flavoprotein (FP) SDHA, iron-sulfur protein (IP) SDHB, and a cytochrome b560 composed of SDHC and SDHD. Interacts with SDHAF1; the interaction is required for iron-sulfur cluster incorporation into SDHB. It depends on [2Fe-2S] cluster as a cofactor. [3Fe-4S] cluster is required as a cofactor. [4Fe-4S] cluster serves as cofactor.

The protein localises to the mitochondrion inner membrane. The enzyme catalyses a quinone + succinate = fumarate + a quinol. It catalyses the reaction (R)-malate + a quinone = enol-oxaloacetate + a quinol. The catalysed reaction is (S)-malate + a quinone = enol-oxaloacetate + a quinol. Its pathway is carbohydrate metabolism; tricarboxylic acid cycle; fumarate from succinate (eukaryal route): step 1/1. Its activity is regulated as follows. Enol-oxaloacetate inhibits the succinate dehydrogenase activity. Its function is as follows. Iron-sulfur protein (IP) subunit of the succinate dehydrogenase complex (mitochondrial respiratory chain complex II), responsible for transferring electrons from succinate to ubiquinone (coenzyme Q). SDH also oxidizes malate to the non-canonical enol form of oxaloacetate, enol-oxaloacetate. Enol-oxaloacetate, which is a potent inhibitor of the succinate dehydrogenase activity, is further isomerized into keto-oxaloacetate. The chain is Succinate dehydrogenase [ubiquinone] iron-sulfur subunit, mitochondrial (Sdhb) from Mus musculus (Mouse).